A 235-amino-acid chain; its full sequence is MICOS complex subunit MIC25 (235 aa).

A lipid anchor (N-myristoyl glycine) is attached at glycine 2. 2 positions are modified to phosphoserine: serine 13 and serine 31. 2 disordered regions span residues 31–90 (SENV…VKRY) and 106–132 (KREREAATKHSKASLPTGEGSISHEEQ). Positions 129–176 (HEEQKSVRLARELESREAELRRRDTFYKEQLERIERKNAEMYKLSSEQ) form a coiled coil. The region spanning 194–235 (EPVCSGLQAQILHCYRDRPHEVLLCSDLVKAYQRCVSAAHKG) is the CHCH domain. 2 consecutive short sequence motifs (cx9C motif) follow at residues 197–207 (CSGLQAQILHC) and 218–228 (CSDLVKAYQRC). 2 cysteine pairs are disulfide-bonded: cysteine 197–cysteine 228 and cysteine 207–cysteine 218.

It belongs to the MICOS complex subunit Mic19 family. Metazoan Mic25 subfamily. In terms of assembly, component of the mitochondrial contact site and cristae organizing system (MICOS) complex, composed of at least MICOS10/MIC10, CHCHD3/MIC19, CHCHD6/MIC25, APOOL/MIC27, IMMT/MIC60, APOO/MIC23/MIC26 and MICOS13/MIC13. This complex was also known under the names MINOS or MitOS complex. The MICOS complex associates with mitochondrial outer membrane proteins SAMM50, MTX1 and MTX2 (together described as components of the mitochondrial outer membrane sorting assembly machinery (SAM) complex) and DNAJC11, mitochondrial inner membrane protein TMEM11 and with HSPA9. The MICOS and SAM complexes together with DNAJC11 are part of a large protein complex spanning both membranes termed the mitochondrial intermembrane space bridging (MIB) complex. Interacts with DISC1. Interacts with DISC1. Interacts with IMMT/MIC60. (Microbial infection) Interacts with human cytomegalovirus protein UL37 isoform vMIA; this interaction rewires mitochondria by engaging the conserved MICOS complex.

It is found in the mitochondrion inner membrane. The protein localises to the mitochondrion. Its function is as follows. Component of the MICOS complex, a large protein complex of the mitochondrial inner membrane that plays crucial roles in the maintenance of crista junctions, inner membrane architecture, and formation of contact sites to the outer membrane. The polypeptide is MICOS complex subunit MIC25 (CHCHD6) (Homo sapiens (Human)).